The following is a 431-amino-acid chain: Glutamate-1-semialdehyde 2,1-aminomutase (431 aa).

The residue at position 265 (Lys265) is an N6-(pyridoxal phosphate)lysine.

The protein belongs to the class-III pyridoxal-phosphate-dependent aminotransferase family. HemL subfamily. In terms of assembly, homodimer. The cofactor is pyridoxal 5'-phosphate.

The protein resides in the cytoplasm. It carries out the reaction (S)-4-amino-5-oxopentanoate = 5-aminolevulinate. It functions in the pathway porphyrin-containing compound metabolism; protoporphyrin-IX biosynthesis; 5-aminolevulinate from L-glutamyl-tRNA(Glu): step 2/2. The polypeptide is Glutamate-1-semialdehyde 2,1-aminomutase (Vibrio parahaemolyticus serotype O3:K6 (strain RIMD 2210633)).